We begin with the raw amino-acid sequence, 144 residues long: Large ribosomal subunit protein uL13 (144 aa).

It belongs to the universal ribosomal protein uL13 family. As to quaternary structure, part of the 50S ribosomal subunit.

Functionally, this protein is one of the early assembly proteins of the 50S ribosomal subunit, although it is not seen to bind rRNA by itself. It is important during the early stages of 50S assembly. The polypeptide is Large ribosomal subunit protein uL13 (Lawsonia intracellularis (strain PHE/MN1-00)).